The sequence spans 232 residues: Protein TIFY 10c (232 aa).

The segment at 54 to 73 (PPAAGAGGAFRPPPTTMNLL) is disordered. The Tify domain maps to 114-149 (AGEKAQQLTIFYGGKVVVFENFPSTKVKDLLQIVST). Positions 152–177 (GVDKNTGTAATQSLPRPAHNSLPDLP) are disordered. Over residues 156-165 (NTGTAATQSL) the composition is skewed to polar residues. Positions 177–202 (PIARRNSLHRFLEKRKGRMNANAPYQ) match the Jas motif. A Nuclear localization signal motif is present at residues 179-186 (ARRNSLHR).

This sequence belongs to the TIFY/JAZ family. As to quaternary structure, interacts with BHLH148. Interacts with COI1B in a coronatine-dependent manner. Coronatine is an analog of jasmonoyl isoleucine (JA-Ile). Interacts with TIFY5/JAZ2, TIFY6B/JAZ4, TIFY9/JAZ5, TIFY11A, TIFY11D/JAZ12, TIFY11G/JAZ15 and NINJA1. Ubiquitinated. Increase in jasmonoyl isoleucine (JA-Ile) levels mediates its degradation via COI1B-mediated proteasome pathway.

It localises to the nucleus. The protein resides in the cytoplasm. Its subcellular location is the cytosol. In terms of biological role, repressor of jasmonate (JA) responses. Acts as a repressor of JA-induced resistance to the bacterial blight pathogen Xanthomonas oryzae pv. oryzae (Xoo). Regulates JA-induced accumulation of linalool at the transcriptional level of linalool synthase gene LIS. Linalool is important for resistance to bacterial blight pathogen Xoo. In Oryza sativa subsp. japonica (Rice), this protein is Protein TIFY 10c.